Consider the following 301-residue polypeptide: Probable alpha-L-glutamate ligase 1 (301 aa).

The 184-residue stretch at 104–287 folds into the ATP-grasp domain; sequence MQLMSRRGIG…VAGAIIEFVE (184 aa). ATP is bound by residues Lys141, 178 to 179, Asp187, and 211 to 213; these read EY and RSN. The Mg(2+) site is built by Asp248, Glu260, and Asn262. Residues Asp248, Glu260, and Asn262 each coordinate Mn(2+).

This sequence belongs to the RimK family. Mg(2+) serves as cofactor. It depends on Mn(2+) as a cofactor.

The sequence is that of Probable alpha-L-glutamate ligase 1 from Shewanella putrefaciens (strain CN-32 / ATCC BAA-453).